The following is a 296-amino-acid chain: Lipoyl synthase (296 aa).

Positions 37, 42, 48, 63, 67, 70, and 276 each coordinate [4Fe-4S] cluster. The Radical SAM core domain maps to 49–265 (WSKKHATMMI…ERVARTKGFL (217 aa)).

It belongs to the radical SAM superfamily. Lipoyl synthase family. [4Fe-4S] cluster serves as cofactor.

The protein localises to the cytoplasm. The enzyme catalyses [[Fe-S] cluster scaffold protein carrying a second [4Fe-4S](2+) cluster] + N(6)-octanoyl-L-lysyl-[protein] + 2 oxidized [2Fe-2S]-[ferredoxin] + 2 S-adenosyl-L-methionine + 4 H(+) = [[Fe-S] cluster scaffold protein] + N(6)-[(R)-dihydrolipoyl]-L-lysyl-[protein] + 4 Fe(3+) + 2 hydrogen sulfide + 2 5'-deoxyadenosine + 2 L-methionine + 2 reduced [2Fe-2S]-[ferredoxin]. Its pathway is protein modification; protein lipoylation via endogenous pathway; protein N(6)-(lipoyl)lysine from octanoyl-[acyl-carrier-protein]: step 2/2. Functionally, catalyzes the radical-mediated insertion of two sulfur atoms into the C-6 and C-8 positions of the octanoyl moiety bound to the lipoyl domains of lipoate-dependent enzymes, thereby converting the octanoylated domains into lipoylated derivatives. This Rickettsia canadensis (strain McKiel) protein is Lipoyl synthase.